The sequence spans 325 residues: Gamma-hemolysin component B (325 aa).

The first 25 residues, 1–25, serve as a signal peptide directing secretion; it reads MNMNKLVKSSVATSMALLLLSNTAN.

It belongs to the aerolysin family. As to quaternary structure, toxicity requires sequential binding and synergistic association of a class S and a class F component which form heterooligomeric complexes. HlgB (class F) associates with either hlgA thus forming an AB toxin or with hlgC thus forming a CB toxin. Interacts with host AMFR.

Toxin that seems to act by forming pores in the membrane of the cell. Has a hemolytic and a leucotoxic activity. Promotes host AMFR-mediated inflammation by mediating 'Lys-27'-linked ubiquitination of TAB3, TAK1-TAB3 complex formation and phosphorylation of TAK1/MAP3K7. In turn, activates host NF-kappa-B signaling pathway. In Staphylococcus aureus (strain MRSA252), this protein is Gamma-hemolysin component B (hlgB).